A 1242-amino-acid polypeptide reads, in one-letter code: MAENIMVDSHVWVEDPERAWIDGVVLNIKGEEAEIKTNDGRDVIANLSRLYPKDTEAPSEGVEDMTRLSYLHEPAVLDNLATRYELNEIYTYTGNILIAVNPFQGLPHLYDAEVMEKYKEAYFKELNPHVFAIGGIAYREMINEGRNKCILVSGESGSGKTETTKMLMRYLAYFGGHTAVEGRTVENQVLESNPVLEAFGNAKTVKNNNSSRFGKFVEIQFDDVGRISGAAIRTYLLERSRVCQVSDPERNYHCFYLLCAAPPEDVERFKLGDPKSFRYLNQSSCYKLDGVNDAEEYLATRRAMDVVGISEKEQDAIFRVVASILHLGNIEFSKGEDADSSSVKDEQSMFHLQMTSELLMCDPHSLEDALCKRMMVTPEEVIKRSLDPLGAAVSRDGLAKTIYSRLFDWLVNKINISIGQDSHSRRLIGVLDIYGFESFKTNSFEQFCINYTNEKLQQHFNQHVFKMEQGEYQKEEIDWSYVEFVDNKDVVDLIEKKPGGIIALLDEACMLPKSTPETFSEKLYHTFKDHKRFMKPKLTRSDFTLVHYAGDVQYQSDQFLDKNKDYVVAEHQDLLNASKCSFVSGLFPPLPKESSKSKFSSIGARFKLQLQQLMETLNSTEPHYIRCVKPNNLLQPTVFDNANVLHQLRSGGVLEAIRVKCAGYPTNRTFIEFLNRFLILAPEILKGEYEAEVACKWILEKKGLTGYQIGKSKVFLRAGQMAELDAHRTRVLGESARMIQGQVRTRLTRERFVLMRRASVNIQANWRGNIARKISKEMRREEAAIKIQKNLRRQIAKKDYGKTKSSALTLQSGVRTMAARHEFRYKLTTRAATVIQAYWRGYSAISDYKKLKRVSLLCKSNLRGRIARKQLGQSKQADRKEETEKERKVELSNRAEEAVDMSFVLHSEQSDDAESGHGRKAKLSIESEDGLDKSSVLHSEQSDDEELGHERKTKLSIESEDGHSDQSDDEEIEHERKTKHCIQAEDGIEKSYVMHSDQSDDEEIGHKRKTKHSIQAEDGIEKSFVVHSDQSDDEEIGHERKTKHAIQVEDGIQKSFVTCSEKPYNTFSVVSQITSPIRDTEIESLTAEVEMLKALLQVEKQRADISERKCAEARELGERRRKRLEETERRVYQLQDSLNRLLYSMSDQFSQLKSILRSPSMSASTMASAPVVRDDLADSSENSEASSSDSDFTFPAPSPSSDNFSTFNPNQLQVIVQDLSTTEAKGTESYDSDKEGGFEDYF.

Residues 6-55 enclose the Myosin N-terminal SH3-like domain; the sequence is MVDSHVWVEDPERAWIDGVVLNIKGEEAEIKTNDGRDVIANLSRLYPKDT. One can recognise a Myosin motor domain in the interval 60–729; it reads EGVEDMTRLS…QMAELDAHRT (670 aa). ATP is bound by residues 154 to 161 and 207 to 215; these read GESGSGKT and NNNSSRFGK. 4 actin-binding regions span residues 493 to 527, 529 to 552, 587 to 610, and 610 to 632; these read LIEKKPGGIIALLDEACMLPKSTPETFSEKLYHTF, DHKRFMKPKLTRSDFTLVHYAGDV, FPPLPKESSKSKFSSIGARFKLQL, and LQQLMETLNSTEPHYIRCVKPNN. IQ domains lie at 732 to 761, 755 to 784, 780 to 809, 803 to 832, 828 to 857, and 851 to 880; these read LGESARMIQGQVRTRLTRERFVLMRRASVN, MRRASVNIQANWRGNIARKISKEMRREEAA, REEAAIKIQKNLRRQIAKKDYGKTKSSALT, TKSSALTLQSGVRTMAARHEFRYKLTTRAA, TTRAATVIQAYWRGYSAISDYKKLKRVSLL, and LKRVSLLCKSNLRGRIARKQLGQSKQADRK. Disordered regions lie at residues 869–893 and 908–1042; these read KQLGQSKQADRKEETEKERKVELSN and EQSD…ERKT. Residues 876-893 are compositionally biased toward basic and acidic residues; the sequence is QADRKEETEKERKVELSN. A run of 6 repeats spans residues 876–908, 909–940, 941–965, 966–997, 998–1029, and 1030–1061. The interval 876–1061 is 6 X 33 AA repeats of Q-S-D-D-x-E-E-x(2)-H-x-R-K-x-K-x(2)-I-x(2)-E-D-G-x(3)-S-x-V-x-H-S-x; that stretch reads QADRKEETEK…IQKSFVTCSE (186 aa). Positions 948-966 are enriched in basic and acidic residues; it reads GHERKTKLSIESEDGHSDQ. Residues 1079–1142 adopt a coiled-coil conformation; that stretch reads DTEIESLTAE…QLQDSLNRLL (64 aa). A disordered region spans residues 1175–1242; the sequence is DLADSSENSE…DKEGGFEDYF (68 aa). A compositionally biased stretch (low complexity) spans 1179–1191; sequence SSENSEASSSDSD. Positions 1199-1224 are enriched in polar residues; the sequence is PSSDNFSTFNPNQLQVIVQDLSTTEA. The span at 1225 to 1242 shows a compositional bias: basic and acidic residues; that stretch reads KGTESYDSDKEGGFEDYF.

This sequence belongs to the TRAFAC class myosin-kinesin ATPase superfamily. Myosin family. Plant myosin class XI subfamily. As to quaternary structure, homodimer. As to expression, expressed in flowers and leaves.

It localises to the cytoplasm. Functionally, myosin heavy chain that is required for the cell cycle-regulated transport of various organelles and proteins for their segregation. Functions by binding with its tail domain to receptor proteins on organelles and exerting force with its N-terminal motor domain against actin filaments, thereby transporting its cargo along polarized actin cables. The sequence is that of Myosin-16 (XI-J) from Arabidopsis thaliana (Mouse-ear cress).